The primary structure comprises 375 residues: 4,4'-diaponeurosporenoate glycosyltransferase (375 aa).

4 helical membrane passes run 3–23, 164–184, 277–297, and 330–350; these read WLSR…ALIF, FYEG…NVFS, IMAA…GLCL, and FSNL…KIFI.

The protein belongs to the glycosyltransferase 2 family. CrtQ subfamily.

Its subcellular location is the cell membrane. Its pathway is carotenoid biosynthesis; staphyloxanthin biosynthesis; staphyloxanthin from farnesyl diphosphate: step 4/5. Functionally, catalyzes the glycosylation of 4,4'-diaponeurosporenoate, i.e. the esterification of glucose at the C1'' position with the carboxyl group of 4,4'-diaponeurosporenic acid, to form glycosyl-4,4'-diaponeurosporenoate. This is a step in the biosynthesis of staphyloxanthin, an orange pigment present in most staphylococci strains. This is 4,4'-diaponeurosporenoate glycosyltransferase (crtQ) from Staphylococcus aureus (strain MRSA252).